A 146-amino-acid chain; its full sequence is Histone H2A.1 (146 aa).

An N-acetylmethionine modification is found at Met1. Positions 1–24 (MDATKTTKGAGGRKGGPRKKSVTK) are disordered. The short motif at 142–145 (SPKK) is the SPKK motif element.

This sequence belongs to the histone H2A family. In terms of assembly, the nucleosome is a histone octamer containing two molecules each of H2A, H2B, H3 and H4 assembled in one H3-H4 heterotetramer and two H2A-H2B heterodimers. The octamer wraps approximately 147 bp of DNA. High expression in meristematic tissues, in cells of the root pericycle and in shoot cortical cells undergoing endoduplication of their DNA.

The protein resides in the nucleus. It is found in the chromosome. In terms of biological role, core component of nucleosome. Nucleosomes wrap and compact DNA into chromatin, limiting DNA accessibility to the cellular machineries which require DNA as a template. Histones thereby play a central role in transcription regulation, DNA repair, DNA replication and chromosomal stability. DNA accessibility is regulated via a complex set of post-translational modifications of histones, also called histone code, and nucleosome remodeling. This chain is Histone H2A.1, found in Solanum lycopersicum (Tomato).